A 1362-amino-acid polypeptide reads, in one-letter code: DNA-directed RNA polymerase subunit beta (1362 aa).

This sequence belongs to the RNA polymerase beta chain family. In terms of assembly, the RNAP catalytic core consists of 2 alpha, 1 beta, 1 beta' and 1 omega subunit. When a sigma factor is associated with the core the holoenzyme is formed, which can initiate transcription.

The catalysed reaction is RNA(n) + a ribonucleoside 5'-triphosphate = RNA(n+1) + diphosphate. In terms of biological role, DNA-dependent RNA polymerase catalyzes the transcription of DNA into RNA using the four ribonucleoside triphosphates as substrates. This Parvibaculum lavamentivorans (strain DS-1 / DSM 13023 / NCIMB 13966) protein is DNA-directed RNA polymerase subunit beta.